A 184-amino-acid polypeptide reads, in one-letter code: Large ribosomal subunit protein uL6 (184 aa).

It belongs to the universal ribosomal protein uL6 family. As to quaternary structure, part of the 50S ribosomal subunit.

Functionally, this protein binds to the 23S rRNA, and is important in its secondary structure. It is located near the subunit interface in the base of the L7/L12 stalk, and near the tRNA binding site of the peptidyltransferase center. This chain is Large ribosomal subunit protein uL6, found in Thermococcus kodakarensis (strain ATCC BAA-918 / JCM 12380 / KOD1) (Pyrococcus kodakaraensis (strain KOD1)).